Consider the following 495-residue polypeptide: MDLLQRAGLVVGLWVTYHILLGTYNVFFHPLRRFPGPRLAAATQLVNVYYIIRGINCKYLYELHEKYGDVVRTGPNELSFRTASAIRTIYGGNPGPDDTFHKNMIANIQETGDSDNLFFATGQQHNRYRRLIMPVFAERTIQGQGPMMQEYCSQLIQGLRNRCGRGYFPTQDGVVDIVPWTHFIISDILSHMLFGSGMNCLLNGDYHPWVMAGYKALIESTYIEAAHRLRPYHRILEYLLIPTRLRDGFRVHSAVSREKLQARSKEAEPYQFSLPSFTSESLSEQELFDNINVIATAAGETTSSALSAIMYYLTANPAAYDKAVTEVRQAFSNEAEITAASSASLPYLKAVIREAFRIRPTIPVGLHRLTPKGGREIDGKWVPAGTWISVANLAACRTSSHWKEAGRFIPERWLGDPEFASDNRDTSVPYSIGVRNCIGMSHANTQLRLILSRLLWNFDFEACPGNADPYDYLEYGTWQVEPLKLRVVDIRGQPK.

The chain crosses the membrane as a helical span at residues 8–28; that stretch reads GLVVGLWVTYHILLGTYNVFF. Residue cysteine 437 coordinates heme.

The protein belongs to the cytochrome P450 family. Requires heme as cofactor.

It is found in the membrane. It catalyses the reaction (S,S)-2,5-di-(p-hydroxybenzyl)piperazine + reduced [NADPH--hemoprotein reductase] + O2 = (1S,4S)-4-[(4-hydroxyphenyl)methyl]-2,5-diazaspiro[bicyclo[3.2.1]octane-6,1'-cyclohexane]-2',5'-dien-4'-one + oxidized [NADPH--hemoprotein reductase] + 2 H2O + H(+). It functions in the pathway secondary metabolite biosynthesis. In terms of biological role, cytochrome P450 monooxygenase; part of the gene cluster that mediates the biosynthesis of the alkaloid (-)-FR901483, a potent immunosuppressant that shows efficacy in animal models and a probable inhibitor of purine nucleotide biosynthesis by targeting phosphoribosylpyrophosphate amidotransferase (PPAT). Within the pathway, FrzC catalyzes the coupling between N10 and C1' to produce a 1,4-diazabicyclo[3.2.1]octane spiro-fused to a 2,5-cyclohexadienone. FrzC probably first catalyzes homolysis of the N-H bond to generate the N10 radical which is followed by an O-H abstraction to give the phenolic radical which can be delocalized to C1'. Radical coupling between N10 and C1' then forms. The biosynthesis of (-)-FR901483 starts with the condensation of two L-tyrosines to yield (S,S)-dityrosyl-piperazine. This process occurs in 3 steps with the non-canonical nonribosomal peptide synthetase FrzA catalyzing the reduction of L-tyrosine into L-tyrosinal, the spontaneous condensation of 2 L-tyrosinal units, and the subsequent reduction by the NmrA-like family domain-containing oxidoreductase FrzB. The cytochrome P450 monooxygenase FrzC then performs coupling between N10 and C1' to morph the piperazine into a 1,4-diazabicyclo[3.2.1]octane spiro-fused to a 2,5-cyclohexadienone. The dienone portion is further reduced to cyclohexanone by the flavin-dependent reductase FrzD. The methyltranserases (MTs) FrzE and FrzF are then involved in the methylation at the C10' amine and the C4 phenolic oxygen, respectively. The order of the two MTs appear to be interchangeable. Cleavage of the C9-N10' bond by the dioxygenase FrzG then leads to formation of a conjugated iminium. In addition to the oxidation of C9, an additional dehydrogenation between C7 and C8 can occur to give a likely shunt product. The next biosynthetic step is the intramolecular aldol condensation catalyzed by the newly identified aldolase FrzH to yield an aza-tricyclic product with the formation of a C9-C3' bond. The short-chain dehydrogenase/reductase FrzI then produces dephospho-(-)-FR901483 that is phosphorylated at C4'-OH into (-)-FR901483 by the phosphotransferase FrzJ. The sequence is that of Cytochrome P450 monooxygenase FrzC from Cladobotryum sp.